Here is a 271-residue protein sequence, read N- to C-terminus: MKIIPCPSSPLLARRVAEAAGIEIGGAVFKKFPDGELYVRVMEKEGVVVGSINSNEDLIALIFALDVLENAKAVVPYMGYARQDKVFQEGEAVSIKIVAEMLESRADEVVTVNIHSSDAASHFSKLKNLDAMPLVGEYFAGKDVVMISPDKGSMERVKTAAKHAGCEWDYMEKRRIDATTVEITPKTIDVEGRDVVIVDDIISTGGTVAEAARILYGLGAKSVSAACVHAVLAENAAIKLFNAGIKDIIATDTVECAFSRISVAELIAENI.

Residues 34 to 36 and 82 to 83 each bind ATP; these read DGE and RQ. Positions 115 and 150 each coordinate Mg(2+). Residue lysine 173 is part of the active site. Residues arginine 175, aspartate 199, and 203-207 contribute to the D-ribose 5-phosphate site; that span reads STGGT.

This sequence belongs to the ribose-phosphate pyrophosphokinase family. Class III (archaeal) subfamily. The cofactor is Mg(2+).

It is found in the cytoplasm. It carries out the reaction D-ribose 5-phosphate + ATP = 5-phospho-alpha-D-ribose 1-diphosphate + AMP + H(+). Its pathway is metabolic intermediate biosynthesis; 5-phospho-alpha-D-ribose 1-diphosphate biosynthesis; 5-phospho-alpha-D-ribose 1-diphosphate from D-ribose 5-phosphate (route I): step 1/1. In terms of biological role, involved in the biosynthesis of the central metabolite phospho-alpha-D-ribosyl-1-pyrophosphate (PRPP) via the transfer of pyrophosphoryl group from ATP to 1-hydroxyl of ribose-5-phosphate (Rib-5-P). The polypeptide is Ribose-phosphate pyrophosphokinase 2 (Archaeoglobus fulgidus (strain ATCC 49558 / DSM 4304 / JCM 9628 / NBRC 100126 / VC-16)).